The primary structure comprises 233 residues: LexA repressor (233 aa).

Positions 26–46 (FDEMKDALDLRSKSGIHRLIT) form a DNA-binding region, H-T-H motif. Catalysis depends on for autocatalytic cleavage activity residues Ser-154 and Lys-192.

The protein belongs to the peptidase S24 family. In terms of assembly, homodimer.

The catalysed reaction is Hydrolysis of Ala-|-Gly bond in repressor LexA.. Represses a number of genes involved in the response to DNA damage (SOS response), including recA and lexA. In the presence of single-stranded DNA, RecA interacts with LexA causing an autocatalytic cleavage which disrupts the DNA-binding part of LexA, leading to derepression of the SOS regulon and eventually DNA repair. The chain is LexA repressor from Nitrobacter hamburgensis (strain DSM 10229 / NCIMB 13809 / X14).